The following is a 153-amino-acid chain: Large ribosomal subunit protein uL15 (153 aa).

The segment at 21–40 (RGIGSGKGKTGGRGIKGQKS) is disordered. Over residues 23 to 35 (IGSGKGKTGGRGI) the composition is skewed to gly residues.

The protein belongs to the universal ribosomal protein uL15 family. In terms of assembly, part of the 50S ribosomal subunit.

Its function is as follows. Binds to the 23S rRNA. In Rickettsia canadensis (strain McKiel), this protein is Large ribosomal subunit protein uL15.